We begin with the raw amino-acid sequence, 312 residues long: Taste receptor type 2 member 7 (312 aa).

The Extracellular portion of the chain corresponds to Met-1–Leu-9. The helical transmembrane segment at Met-10–Val-30 threads the bilayer. The Cytoplasmic portion of the chain corresponds to Asn-31–Ser-49. A helical transmembrane segment spans residues Ser-50–Val-70. The Extracellular segment spans residues Gln-71–Thr-101. The chain crosses the membrane as a helical span at residues Cys-102–Ile-122. Residues Lys-123 to Lys-128 lie on the Cytoplasmic side of the membrane. A helical membrane pass occupies residues Leu-129 to Thr-149. Topologically, residues Glu-150–Asn-187 are extracellular. N-linked (GlcNAc...) asparagine glycosylation is found at Asn-151 and Asn-167. Residues Leu-188 to Leu-208 form a helical membrane-spanning segment. At Trp-209–Lys-235 the chain is on the cytoplasmic side. Residues Ala-236–Ser-256 form a helical membrane-spanning segment. Residues Ser-257–Ala-266 lie on the Extracellular side of the membrane. The helical transmembrane segment at Val-267–Leu-287 threads the bilayer. At Gly-288–Tyr-312 the chain is on the cytoplasmic side.

It belongs to the G-protein coupled receptor T2R family. Expressed in subsets of taste receptor cells of the tongue and palate epithelium and exclusively in gustducin-positive cells. Expressed in 15% taste bud cells in circumvallate and foliate papillae but only in 2% in fungiform papillae. Expressed in gastric and duodenal tissues.

The protein resides in the membrane. In terms of biological role, gustducin-coupled receptor implicated in the perception of bitter compounds in the oral cavity and the gastrointestinal tract. Signals through PLCB2 and the calcium-regulated cation channel TRPM5. This Mus musculus (Mouse) protein is Taste receptor type 2 member 7 (Tas2r7).